Reading from the N-terminus, the 126-residue chain is Large ribosomal subunit protein bL12 (126 aa).

The protein belongs to the bacterial ribosomal protein bL12 family. Homodimer. Part of the ribosomal stalk of the 50S ribosomal subunit. Forms a multimeric L10(L12)X complex, where L10 forms an elongated spine to which 2 to 4 L12 dimers bind in a sequential fashion. Binds GTP-bound translation factors.

Functionally, forms part of the ribosomal stalk which helps the ribosome interact with GTP-bound translation factors. Is thus essential for accurate translation. This is Large ribosomal subunit protein bL12 from Acidobacterium capsulatum (strain ATCC 51196 / DSM 11244 / BCRC 80197 / JCM 7670 / NBRC 15755 / NCIMB 13165 / 161).